We begin with the raw amino-acid sequence, 78 residues long: MSEIAQKVKSIIVEKLGVEESEVTTEASFTNDLGADSLDTVELIMEFEKEFNISIPDEQAENITTVGQAIAYLEQHVK.

Residues 2-77 (SEIAQKVKSI…QAIAYLEQHV (76 aa)) enclose the Carrier domain. An O-(pantetheine 4'-phosphoryl)serine modification is found at S37.

This sequence belongs to the acyl carrier protein (ACP) family. In terms of processing, 4'-phosphopantetheine is transferred from CoA to a specific serine of apo-ACP by AcpS. This modification is essential for activity because fatty acids are bound in thioester linkage to the sulfhydryl of the prosthetic group.

The protein localises to the cytoplasm. It functions in the pathway lipid metabolism; fatty acid biosynthesis. Its function is as follows. Carrier of the growing fatty acid chain in fatty acid biosynthesis. The protein is Acyl carrier protein of Cytophaga hutchinsonii (strain ATCC 33406 / DSM 1761 / CIP 103989 / NBRC 15051 / NCIMB 9469 / D465).